We begin with the raw amino-acid sequence, 218 residues long: Pyrrolidone-carboxylate peptidase 2 (218 aa).

Active-site residues include glutamate 83, cysteine 146, and histidine 170.

The protein belongs to the peptidase C15 family. Homotetramer.

Its subcellular location is the cytoplasm. It catalyses the reaction Release of an N-terminal pyroglutamyl group from a polypeptide, the second amino acid generally not being Pro.. Its function is as follows. Removes 5-oxoproline from various penultimate amino acid residues except L-proline. This chain is Pyrrolidone-carboxylate peptidase 2, found in Photorhabdus laumondii subsp. laumondii (strain DSM 15139 / CIP 105565 / TT01) (Photorhabdus luminescens subsp. laumondii).